Here is a 663-residue protein sequence, read N- to C-terminus: Bifunctional polymyxin resistance protein ArnA (663 aa).

The segment at 1 to 307 (MSPKAVVFAY…EFGLVEGSQL (307 aa)) is formyltransferase ArnAFT. His106 (proton donor; for formyltransferase activity) is an active-site residue. (6R)-10-formyltetrahydrofolate contacts are provided by residues Arg116 and 138-142 (VKRAD). The dehydrogenase ArnADH stretch occupies residues 317-663 (RRTRVLILGV…EAMAEKADMR (347 aa)). NAD(+) is bound by residues Asp350 and 371–372 (DI). Residues Ala396, Tyr401, and 435–436 (TS) each bind UDP-alpha-D-glucuronate. Glu437 serves as the catalytic Proton acceptor; for decarboxylase activity. UDP-alpha-D-glucuronate is bound by residues Arg463, Asn494, 528 to 537 (RLVDGGAQKR), and Tyr615. The Proton donor; for decarboxylase activity role is filled by Arg621.

The protein in the N-terminal section; belongs to the Fmt family. UDP-L-Ara4N formyltransferase subfamily. This sequence in the C-terminal section; belongs to the NAD(P)-dependent epimerase/dehydratase family. UDP-glucuronic acid decarboxylase subfamily. Homohexamer, formed by a dimer of trimers.

It catalyses the reaction UDP-alpha-D-glucuronate + NAD(+) = UDP-beta-L-threo-pentopyranos-4-ulose + CO2 + NADH. The enzyme catalyses UDP-4-amino-4-deoxy-beta-L-arabinose + (6R)-10-formyltetrahydrofolate = UDP-4-deoxy-4-formamido-beta-L-arabinose + (6S)-5,6,7,8-tetrahydrofolate + H(+). Its pathway is nucleotide-sugar biosynthesis; UDP-4-deoxy-4-formamido-beta-L-arabinose biosynthesis; UDP-4-deoxy-4-formamido-beta-L-arabinose from UDP-alpha-D-glucuronate: step 1/3. The protein operates within nucleotide-sugar biosynthesis; UDP-4-deoxy-4-formamido-beta-L-arabinose biosynthesis; UDP-4-deoxy-4-formamido-beta-L-arabinose from UDP-alpha-D-glucuronate: step 3/3. It participates in bacterial outer membrane biogenesis; lipopolysaccharide biosynthesis. In terms of biological role, bifunctional enzyme that catalyzes the oxidative decarboxylation of UDP-glucuronic acid (UDP-GlcUA) to UDP-4-keto-arabinose (UDP-Ara4O) and the addition of a formyl group to UDP-4-amino-4-deoxy-L-arabinose (UDP-L-Ara4N) to form UDP-L-4-formamido-arabinose (UDP-L-Ara4FN). The modified arabinose is attached to lipid A and is required for resistance to polymyxin and cationic antimicrobial peptides. This Pseudomonas savastanoi pv. phaseolicola (strain 1448A / Race 6) (Pseudomonas syringae pv. phaseolicola (strain 1448A / Race 6)) protein is Bifunctional polymyxin resistance protein ArnA.